The primary structure comprises 510 residues: Chromosomal replication initiator protein DnaA (510 aa).

The segment at 1 to 87 (MSVELWQQCV…IGSRRSSAPR (87 aa)) is domain I, interacts with DnaA modulators. Positions 87 to 173 (RAAPNAPVSA…QVEGALKHTS (87 aa)) are domain II. The segment at 140 to 160 (DSFDAMAEPASAPASSGRAEQ) is disordered. The span at 144 to 157 (AMAEPASAPASSGR) shows a compositional bias: low complexity. Residues 174–390 (YLNRTFTFDT…GALKRVIAHS (217 aa)) form a domain III, AAA+ region region. Gly218, Gly220, Lys221, and Thr222 together coordinate ATP. The interval 391-510 (HFMGRDITIE…YKNLLRTLTT (120 aa)) is domain IV, binds dsDNA.

The protein belongs to the DnaA family. As to quaternary structure, oligomerizes as a right-handed, spiral filament on DNA at oriC.

Its subcellular location is the cytoplasm. In terms of biological role, plays an essential role in the initiation and regulation of chromosomal replication. ATP-DnaA binds to the origin of replication (oriC) to initiate formation of the DNA replication initiation complex once per cell cycle. Binds the DnaA box (a 9 base pair repeat at the origin) and separates the double-stranded (ds)DNA. Forms a right-handed helical filament on oriC DNA; dsDNA binds to the exterior of the filament while single-stranded (ss)DNA is stabiized in the filament's interior. The ATP-DnaA-oriC complex binds and stabilizes one strand of the AT-rich DNA unwinding element (DUE), permitting loading of DNA polymerase. After initiation quickly degrades to an ADP-DnaA complex that is not apt for DNA replication. Binds acidic phospholipids. The protein is Chromosomal replication initiator protein DnaA of Pseudomonas putida (strain GB-1).